The following is a 313-amino-acid chain: Ribosomal RNA small subunit methyltransferase H (313 aa).

S-adenosyl-L-methionine is bound by residues 35 to 37, Asp55, Phe79, Asp100, and Gln107; that span reads GGH.

It belongs to the methyltransferase superfamily. RsmH family.

It localises to the cytoplasm. It carries out the reaction cytidine(1402) in 16S rRNA + S-adenosyl-L-methionine = N(4)-methylcytidine(1402) in 16S rRNA + S-adenosyl-L-homocysteine + H(+). Specifically methylates the N4 position of cytidine in position 1402 (C1402) of 16S rRNA. This chain is Ribosomal RNA small subunit methyltransferase H, found in Burkholderia orbicola (strain MC0-3).